We begin with the raw amino-acid sequence, 59 residues long: Large ribosomal subunit protein uL30 (59 aa).

It belongs to the universal ribosomal protein uL30 family. As to quaternary structure, part of the 50S ribosomal subunit.

In Listeria innocua serovar 6a (strain ATCC BAA-680 / CLIP 11262), this protein is Large ribosomal subunit protein uL30.